We begin with the raw amino-acid sequence, 160 residues long: Ribosomal RNA large subunit methyltransferase H (160 aa).

Residues L76 and G108 each coordinate S-adenosyl-L-methionine.

The protein belongs to the RNA methyltransferase RlmH family. Homodimer.

The protein localises to the cytoplasm. The catalysed reaction is pseudouridine(1915) in 23S rRNA + S-adenosyl-L-methionine = N(3)-methylpseudouridine(1915) in 23S rRNA + S-adenosyl-L-homocysteine + H(+). Functionally, specifically methylates the pseudouridine at position 1915 (m3Psi1915) in 23S rRNA. The sequence is that of Ribosomal RNA large subunit methyltransferase H from Bradyrhizobium sp. (strain BTAi1 / ATCC BAA-1182).